A 334-amino-acid polypeptide reads, in one-letter code: Mitochondrial ribosome-associated GTPase 1 (334 aa).

The region spanning 36–209 (AKGLKKMQSS…LLDTPGVLAP (174 aa)) is the CP-type G domain. Residues 83 to 86 (NKMD), 153 to 158 (NVGKSS), and G205 each bind GTP.

Belongs to the TRAFAC class YlqF/YawG GTPase family. MTG1 subfamily. As to quaternary structure, associates with the mitochondrial ribosome large subunit; the association occurs in a GTP-dependent manner.

It localises to the mitochondrion inner membrane. In terms of biological role, plays a role in the regulation of the mitochondrial ribosome assembly and of translational activity. Displays mitochondrial GTPase activity. This chain is Mitochondrial ribosome-associated GTPase 1 (MTG1), found in Homo sapiens (Human).